We begin with the raw amino-acid sequence, 337 residues long: tRNA N6-adenosine threonylcarbamoyltransferase (337 aa).

Fe cation-binding residues include histidine 111 and histidine 115. Substrate is bound by residues 134 to 138 (LVSGG), aspartate 167, glycine 180, and asparagine 272. Aspartate 300 contacts Fe cation.

This sequence belongs to the KAE1 / TsaD family. The cofactor is Fe(2+).

The protein localises to the cytoplasm. The catalysed reaction is L-threonylcarbamoyladenylate + adenosine(37) in tRNA = N(6)-L-threonylcarbamoyladenosine(37) in tRNA + AMP + H(+). Functionally, required for the formation of a threonylcarbamoyl group on adenosine at position 37 (t(6)A37) in tRNAs that read codons beginning with adenine. Is involved in the transfer of the threonylcarbamoyl moiety of threonylcarbamoyl-AMP (TC-AMP) to the N6 group of A37, together with TsaE and TsaB. TsaD likely plays a direct catalytic role in this reaction. The sequence is that of tRNA N6-adenosine threonylcarbamoyltransferase from Salmonella arizonae (strain ATCC BAA-731 / CDC346-86 / RSK2980).